A 692-amino-acid polypeptide reads, in one-letter code: ABC1 family protein C21C3.03, mitochondrial (692 aa).

The transit peptide at 1–91 directs the protein to the mitochondrion; it reads MISFSHWNSH…RKFTTRQKSE (91 aa). The next 2 membrane-spanning stretches (helical) occupy residues 96–116 and 161–181; these read WRIL…LWIL and LFII…ISFL.

The protein belongs to the protein kinase superfamily. ADCK protein kinase family.

The protein resides in the mitochondrion membrane. The chain is ABC1 family protein C21C3.03, mitochondrial from Schizosaccharomyces pombe (strain 972 / ATCC 24843) (Fission yeast).